A 341-amino-acid polypeptide reads, in one-letter code: Heterogeneous nuclear ribonucleoproteins A2/B1 (341 aa).

RRM domains are found at residues 9–92 (RKLF…ESGK) and 100–179 (KKLF…LSRQ). Lys-10 is covalently cross-linked (Glycyl lysine isopeptide (Lys-Gly) (interchain with G-Cter in SUMO2)). Ser-17 bears the Phosphoserine mark. Position 26 is an omega-N-methylarginine (Arg-26). Phosphoserine is present on Ser-73. Lys-92 bears the N6,N6-dimethyllysine; alternate mark. Lys-92 participates in a covalent cross-link: Glycyl lysine isopeptide (Lys-Gly) (interchain with G-Cter in SUMO2); alternate. Glycyl lysine isopeptide (Lys-Gly) (interchain with G-Cter in SUMO2) cross-links involve residues Lys-100, Lys-108, and Lys-125. Thr-128 is subject to Phosphothreonine. A Phosphoserine modification is found at Ser-137. Lys-140 participates in a covalent cross-link: Glycyl lysine isopeptide (Lys-Gly) (interchain with G-Cter in SUMO2). Position 147 is a phosphothreonine (Thr-147). Glycyl lysine isopeptide (Lys-Gly) (interchain with G-Cter in SUMO2); alternate cross-links involve residues Lys-156 and Lys-161. 2 positions are modified to N6-acetyllysine; alternate: Lys-156 and Lys-161. Thr-164 carries the phosphothreonine modification. A Glycyl lysine isopeptide (Lys-Gly) (interchain with G-Cter in SUMO2) cross-link involves residue Lys-174. 2 positions are modified to phosphoserine: Ser-177 and Ser-189. Residues 181 to 341 (MQEVQSSRSG…SGGYGGRSRY (161 aa)) form a disordered region. Gly residues predominate over residues 190-211 (GRGGNFGFGDSRGGGGNFGPGP). At Arg-191 the chain carries Asymmetric dimethylarginine; alternate. Arg-191 is modified (dimethylated arginine; alternate). The residue at position 191 (Arg-191) is an Omega-N-methylarginine; alternate. The residue at position 200 (Ser-200) is a Phosphoserine. Arg-201 bears the Asymmetric dimethylarginine; alternate mark. A Dimethylated arginine; alternate modification is found at Arg-201. Omega-N-methylarginine; alternate is present on Arg-201. Ser-213 bears the Phosphoserine mark. Arg-216 carries the omega-N-methylarginine modification. Ser-219 and Ser-224 each carry phosphoserine. Arg-226 carries the omega-N-methylarginine modification. Ser-247 carries the post-translational modification Phosphoserine. Arg-254 is subject to Asymmetric dimethylarginine; alternate. Arg-254 bears the Omega-N-methylarginine; alternate mark. Positions 296-335 (QQPSNYGPMKSGNFGGSRNMGGPYGGGNYGPGGSGGSGGY) are nuclear targeting sequence. Over residues 308 to 341 (NFGGSRNMGGPYGGGNYGPGGSGGSGGYGGRSRY) the composition is skewed to gly residues. Residue Ser-312 is modified to Phosphoserine. The residue at position 313 (Arg-313) is an Omega-N-methylarginine. A Phosphotyrosine modification is found at Tyr-319. Phosphoserine is present on residues Ser-329 and Ser-332. Tyr-335 carries the phosphotyrosine modification. Position 338 is an omega-N-methylarginine (Arg-338).

As to quaternary structure, identified in the spliceosome C complex. Identified in a IGF2BP1-dependent mRNP granule complex containing untranslated mRNAs. Interacts with IGF2BP1. Interacts with C9orf72. Interacts with DGCR8. Interacts with TARDBP. Interacts with CKAP5. Interacts with PPIA/CYPA. Interacts (via C-terminus) with FAM76B; the interaction results in retention of HNRNPA2B1 in the nucleus and inhibition of the NF-kappa-B-mediated inflammatory pathway. Interacts with NF-kappa-B inhibitors NFKBIA and NFKBIE; the interaction may be mediated by the RRM2 domain of HNRNPA2B1, and HNRNPA2B1 may interact simultaneously with FAM76B and either NFKBIA or NFKBIE to form a complex. Post-translationally, sumoylated in exosomes, promoting miRNAs-binding. In terms of processing, asymmetric dimethylation at Arg-254 constitutes the major methylation site. According to a report, methylation affects subcellular location and promotes nuclear localization. According to another report, methylation at Arg-254 does not influence nucleocytoplasmic shuttling.

Its subcellular location is the nucleus. It localises to the nucleoplasm. It is found in the cytoplasmic granule. The protein resides in the secreted. The protein localises to the extracellular exosome. Functionally, heterogeneous nuclear ribonucleoprotein (hnRNP) that associates with nascent pre-mRNAs, packaging them into hnRNP particles. The hnRNP particle arrangement on nascent hnRNA is non-random and sequence-dependent and serves to condense and stabilize the transcripts and minimize tangling and knotting. Packaging plays a role in various processes such as transcription, pre-mRNA processing, RNA nuclear export, subcellular location, mRNA translation and stability of mature mRNAs. Forms hnRNP particles with at least 20 other different hnRNP and heterogeneous nuclear RNA in the nucleus. Involved in transport of specific mRNAs to the cytoplasm in oligodendrocytes and neurons: acts by specifically recognizing and binding the A2RE (21 nucleotide hnRNP A2 response element) or the A2RE11 (derivative 11 nucleotide oligonucleotide) sequence motifs present on some mRNAs, and promotes their transport to the cytoplasm. Specifically binds single-stranded telomeric DNA sequences, protecting telomeric DNA repeat against endonuclease digestion. Also binds other RNA molecules, such as primary miRNA (pri-miRNAs): acts as a nuclear 'reader' of the N6-methyladenosine (m6A) mark by specifically recognizing and binding a subset of nuclear m6A-containing pri-miRNAs. Binding to m6A-containing pri-miRNAs promotes pri-miRNA processing by enhancing binding of DGCR8 to pri-miRNA transcripts. Involved in miRNA sorting into exosomes following sumoylation, possibly by binding (m6A)-containing pre-miRNAs. Acts as a regulator of efficiency of mRNA splicing, possibly by binding to m6A-containing pre-mRNAs. Plays a role in the splicing of pyruvate kinase PKM by binding repressively to sequences flanking PKM exon 9, inhibiting exon 9 inclusion and resulting in exon 10 inclusion and production of the PKM M2 isoform. The sequence is that of Heterogeneous nuclear ribonucleoproteins A2/B1 (HNRNPA2B1) from Bos taurus (Bovine).